Consider the following 180-residue polypeptide: Large ribosomal subunit protein uL6 (180 aa).

It belongs to the universal ribosomal protein uL6 family. As to quaternary structure, part of the 50S ribosomal subunit.

In terms of biological role, this protein binds to the 23S rRNA, and is important in its secondary structure. It is located near the subunit interface in the base of the L7/L12 stalk, and near the tRNA binding site of the peptidyltransferase center. The sequence is that of Large ribosomal subunit protein uL6 from Clostridium botulinum (strain Alaska E43 / Type E3).